The primary structure comprises 102 residues: Small ribosomal subunit protein bS20 (102 aa).

Belongs to the bacterial ribosomal protein bS20 family.

Its function is as follows. Binds directly to 16S ribosomal RNA. The chain is Small ribosomal subunit protein bS20 from Synechococcus sp. (strain WH7803).